Consider the following 279-residue polypeptide: Orotidine 5'-phosphate decarboxylase (279 aa).

Substrate is bound by residues Asp8, Lys30, 58-67, Thr117, Arg177, Gln186, Gly206, and Arg207; that span reads DLKIHDIPNT. Lys60 functions as the Proton donor in the catalytic mechanism.

The protein belongs to the OMP decarboxylase family. Type 1 subfamily. In terms of assembly, homodimer.

The catalysed reaction is orotidine 5'-phosphate + H(+) = UMP + CO2. The protein operates within pyrimidine metabolism; UMP biosynthesis via de novo pathway; UMP from orotate: step 2/2. Catalyzes the decarboxylation of orotidine 5'-monophosphate (OMP) to uridine 5'-monophosphate (UMP). In Campylobacter jejuni (strain RM1221), this protein is Orotidine 5'-phosphate decarboxylase.